A 632-amino-acid chain; its full sequence is MSEESHPHEGHMTPSKLFYLALGSVGVVYGDIGTSPLYAFREALKPIAHDGLTRFEVISLISLMIWALTIIVTIKYVLFLLRADNEGEGGTLSLLALLMKTANGHTAILMLLGLMGAALFLGDAMITPALSVLSAVEGLKLVTPSLSDYIVPISVVILALLFVVQSRGTGAVARFFGPITAVWFLVMAAAGISHISDDFGILAAFNPYYAVSFLLHEGFYGVVVLGAVFLTVTGAEALYADLGHFGRRPIQWAWFLLVFPALTLNYLGQGALVLGKPETMSDPFYLMYPKWALLPVVILATAATIIASQAVITGAFSMVRQGINLGFLPRMEILFTSETNTGQIFVPSVNAVLFIGVIFLVLSFKTSDALATAYGISVTGAMVVTSIMAFEFVRARWNWSLPLAVVALAPLVVLELIFLGANLLKIHDGGYIPILIATAFTVIMWTWRRGTAILMEKTRHTDIPLPSFVSAIERKSDHSPAQVPGTAIFLTSDPESAPAALLHNLKHNHVLHDRNVILTIRTANKPRVLNQDRFRIEQISERFFRVELLFGYMEAQNVSQALAVLRKAGLKFDIMSTSFYLGRQKVIPDTNSGMPYWQDRFFILLANGASLPSDYFHLPANRVVELGSQIIV.

Helical transmembrane passes span 17 to 37, 60 to 80, 106 to 126, 144 to 164, 175 to 195, 210 to 230, 254 to 274, 292 to 312, 344 to 364, 370 to 390, 401 to 421, and 426 to 446; these read LFYL…TSPL, LISL…VLFL, TAIL…DAMI, PSLS…LFVV, FFGP…ISHI, AVSF…AVFL, WFLL…ALVL, ALLP…QAVI, IFVP…VLSF, LATA…IMAF, LPLA…FLGA, and IHDG…IMWT.

Belongs to the HAK/KUP transporter (TC 2.A.72) family.

It is found in the cell inner membrane. It catalyses the reaction K(+)(in) + H(+)(in) = K(+)(out) + H(+)(out). Transport of potassium into the cell. Likely operates as a K(+):H(+) symporter. The chain is Probable potassium transport system protein Kup 3 from Rhizobium etli (strain ATCC 51251 / DSM 11541 / JCM 21823 / NBRC 15573 / CFN 42).